Consider the following 107-residue polypeptide: MGDSVLSAIQQTIIQRKSADPSESYVAQLLHKGEDKILKKVIEEAGEVLMASKDKDPSHLVYEVADLWFHTMILLTHHDLKAEDVLDELSRRQGLSGLAEKAARTES.

Belongs to the PRA-PH family.

The protein localises to the cytoplasm. The catalysed reaction is 1-(5-phospho-beta-D-ribosyl)-ATP + H2O = 1-(5-phospho-beta-D-ribosyl)-5'-AMP + diphosphate + H(+). It participates in amino-acid biosynthesis; L-histidine biosynthesis; L-histidine from 5-phospho-alpha-D-ribose 1-diphosphate: step 2/9. This is Phosphoribosyl-ATP pyrophosphatase from Neisseria gonorrhoeae (strain ATCC 700825 / FA 1090).